The chain runs to 627 residues: Altered inheritance of mitochondria protein 9, mitochondrial (627 aa).

A mitochondrion-targeting transit peptide spans M1–V43.

It belongs to the AIM9 family.

It localises to the mitochondrion. This is Altered inheritance of mitochondria protein 9, mitochondrial (AIM9) from Saccharomyces cerevisiae (strain YJM789) (Baker's yeast).